We begin with the raw amino-acid sequence, 93 residues long: Large ribosomal subunit protein uL23cz/uL23cy (93 aa).

This sequence belongs to the universal ribosomal protein uL23 family. In terms of assembly, part of the 50S ribosomal subunit.

It is found in the plastid. Its subcellular location is the chloroplast. In terms of biological role, binds to 23S rRNA. The chain is Large ribosomal subunit protein uL23cz/uL23cy (rpl23-A) from Gossypium barbadense (Sea Island cotton).